The following is a 130-amino-acid chain: Glycine cleavage system H protein (130 aa).

The Lipoyl-binding domain maps to 24–106; that stretch reads TFTVGITDHA…YGDGWLYRIT (83 aa). At Lys65 the chain carries N6-lipoyllysine.

The protein belongs to the GcvH family. The glycine cleavage system is composed of four proteins: P, T, L and H. The cofactor is (R)-lipoate.

Functionally, the glycine cleavage system catalyzes the degradation of glycine. The H protein shuttles the methylamine group of glycine from the P protein to the T protein. The sequence is that of Glycine cleavage system H protein from Coxiella burnetii (strain CbuK_Q154) (Coxiella burnetii (strain Q154)).